The primary structure comprises 466 residues: 3-isopropylmalate dehydratase large subunit (466 aa).

[4Fe-4S] cluster-binding residues include Cys-347, Cys-407, and Cys-410.

This sequence belongs to the aconitase/IPM isomerase family. LeuC type 1 subfamily. Heterodimer of LeuC and LeuD. The cofactor is [4Fe-4S] cluster.

It carries out the reaction (2R,3S)-3-isopropylmalate = (2S)-2-isopropylmalate. It participates in amino-acid biosynthesis; L-leucine biosynthesis; L-leucine from 3-methyl-2-oxobutanoate: step 2/4. Catalyzes the isomerization between 2-isopropylmalate and 3-isopropylmalate, via the formation of 2-isopropylmaleate. This Shewanella halifaxensis (strain HAW-EB4) protein is 3-isopropylmalate dehydratase large subunit.